The primary structure comprises 522 residues: MSHTEPKAPVNTGEVENGHLYDGSGTEDDPFIVEFQKDDPGNPMNWGQSRKWFIAAIATLSVFAVTFTSSAYSVSANEVFKDFDISTEVFIVGLSLFVLGFAIGPAVWANIGLRSELYGRQILWIITHIAMVAFLGGSAGSQNVATLLILRFFAGTFGGSPLVNSGGTIADLFPPAQRGLALTIYCVAPFLGPILGPIVGGFVSESVGWRWVQGVCVIFIGVVGILGIVFIPETYGPVLLQRRTHQLAKADGKIYVSVLEKNQGKKLPSEVFKRALFRPWIFLFLEPIVLIASVYMAIIYGTVYMFMGAMPIVYNEDRGWSVGIGGLAFLGIAVGIIFGLVYAIWDNNVRYMKLFAAKSANPESRLPPAIVGGVALPIGMFAFAWTNYPSIHWSVSIILSAPFGFGCVLVILPIMNYLIDTYTIYAASVLAAAAIFRSVVGAVFPLFTTQMYHNLGIHWASSIPAFLTLLCMPFPLIMYRYGEAVRMKCKYSFEAAEMMRKMQLQQTAAATTTEKDKDSSSE.

Residues 1-21 (MSHTEPKAPVNTGEVENGHLY) are disordered. The next 12 membrane-spanning stretches (helical) occupy residues 52–72 (WFIA…SSAY), 89–109 (VFIV…AVWA), 121–141 (QILW…SAGS), 143–163 (NVAT…SPLV), 183–203 (TIYC…GGFV), 211–231 (WVQG…IVFI), 280–300 (WIFL…AIIY), 324–344 (IGGL…VYAI), 366–386 (LPPA…FAWT), 395–415 (VSII…LPIM), 427–447 (ASVL…FPLF), and 457–477 (IHWA…FPLI).

This sequence belongs to the major facilitator superfamily. Sugar transporter (TC 2.A.1.1) family.

It is found in the membrane. Functionally, major facilitator-type transporter; part of the gene cluster that mediates the biosynthesis of sorbicillinoids, a diverse group of yellow secondary metabolites that restrict growth of competing pathogenic fungi but not of bacteria. The polypeptide is Major facilitator-type transporter sorT (Penicillium rubens (strain ATCC 28089 / DSM 1075 / NRRL 1951 / Wisconsin 54-1255) (Penicillium chrysogenum)).